The primary structure comprises 349 residues: Thylakoid lumenal 29 kDa protein, chloroplastic (349 aa).

Ser-155 carries the post-translational modification Phosphoserine.

It belongs to the peroxidase family.

It is found in the plastid. The protein localises to the chloroplast thylakoid lumen. The chain is Thylakoid lumenal 29 kDa protein, chloroplastic (TL29) from Arabidopsis thaliana (Mouse-ear cress).